Consider the following 145-residue polypeptide: Putative sterol 14-demethylase-like protein (145 aa).

Residues 5-25 traverse the membrane as a helical segment; that stretch reads YYTLLKTSVAIIIVFVVAKLI.

The protein belongs to the cytochrome P450 family. As to expression, expressed specifically in roots.

The protein resides in the membrane. This Arabidopsis thaliana (Mouse-ear cress) protein is Putative sterol 14-demethylase-like protein (CYP51G2).